Reading from the N-terminus, the 332-residue chain is Biotin synthase (332 aa).

Positions 51 to 279 constitute a Radical SAM core domain; the sequence is YKVQLASLLS…LSRVRLSAGR (229 aa). The [4Fe-4S] cluster site is built by C66, C70, and C73. C110, C142, C202, and R274 together coordinate [2Fe-2S] cluster.

This sequence belongs to the radical SAM superfamily. Biotin synthase family. Homodimer. Requires [4Fe-4S] cluster as cofactor. [2Fe-2S] cluster is required as a cofactor.

The enzyme catalyses (4R,5S)-dethiobiotin + (sulfur carrier)-SH + 2 reduced [2Fe-2S]-[ferredoxin] + 2 S-adenosyl-L-methionine = (sulfur carrier)-H + biotin + 2 5'-deoxyadenosine + 2 L-methionine + 2 oxidized [2Fe-2S]-[ferredoxin]. It participates in cofactor biosynthesis; biotin biosynthesis; biotin from 7,8-diaminononanoate: step 2/2. In terms of biological role, catalyzes the conversion of dethiobiotin (DTB) to biotin by the insertion of a sulfur atom into dethiobiotin via a radical-based mechanism. The protein is Biotin synthase of Prochlorococcus marinus (strain MIT 9211).